Consider the following 169-residue polypeptide: Histone H1.9 (169 aa).

2 stretches are compositionally biased toward polar residues: residues 1-10 (MSLVSPSPDS) and 19-36 (DASTSQVPSQSESKIGPN). The interval 1-36 (MSLVSPSPDSNAVMAGDQDASTSQVPSQSESKIGPN) is disordered. An H15 domain is found at 43 to 116 (RKPTMSKVIL…GASGSFRLGK (74 aa)). A phosphoserine mark is found at Ser-62 and Ser-65. The span at 118 to 142 (QAFKSKCKAKRRQRRQKPGQRRTGS) shows a compositional bias: basic residues. The disordered stretch occupies residues 118–154 (QAFKSKCKAKRRQRRQKPGQRRTGSRRSLLGSKKSNN).

The protein belongs to the histone H1/H5 family.

It is found in the nucleus. It localises to the chromosome. DNA-binding protein that may be implicated in chromatin remodeling and/or transcriptional regulation during spermiogenesis, the process of spermatid maturation into spermatozoa. The chain is Histone H1.9 from Rattus norvegicus (Rat).